The following is a 101-amino-acid chain: Small ribosomal subunit protein bS18c (101 aa).

The segment covering 1–19 (MDKSKQPFHKTKRSFRRRL) has biased composition (basic residues). The disordered stretch occupies residues 1 to 23 (MDKSKQPFHKTKRSFRRRLPPIG).

This sequence belongs to the bacterial ribosomal protein bS18 family. In terms of assembly, part of the 30S ribosomal subunit.

The protein localises to the plastid. It is found in the chloroplast. In Lemna minor (Common duckweed), this protein is Small ribosomal subunit protein bS18c.